The chain runs to 859 residues: Bifunctional levopimaradiene synthase, chloroplastic (859 aa).

The N-terminal 70 residues, 1-70 (MALLSSSLSS…IACVGEDSLS (70 aa)), are a transit peptide targeting the chloroplast. Lys-259 provides a ligand contact to substrate. Positions 392 and 394 each coordinate Mg(2+). The short motif at 392–395 (DIDD) is the DXDD motif element. Lys-479 provides a ligand contact to substrate. Asp-611, Asp-615, Asn-755, Thr-759, and Glu-763 together coordinate Mg(2+). A DDXXD motif motif is present at residues 611–615 (DDLYD).

This sequence belongs to the terpene synthase family. Tpsd subfamily. Requires Mg(2+) as cofactor.

It is found in the plastid. Its subcellular location is the chloroplast. The enzyme catalyses (2E,6E,10E)-geranylgeranyl diphosphate = (+)-copalyl diphosphate. The catalysed reaction is (+)-copalyl diphosphate = abieta-8(14),12-diene + diphosphate. It participates in terpene metabolism; oleoresin biosynthesis. Functionally, involved in defensive oleoresin formation in conifers in response to insect attack or other injury. Involved in diterpene (C20) olefins biosynthesis. Bifunctional enzyme that catalyzes two sequential cyclizations of geranylgeranyl diphosphate (GGPP) to levopimaradiene. Levopimaradiene is the major products of the enzyme followed by abietadiene, neoabietadiene and palustradiene. The chain is Bifunctional levopimaradiene synthase, chloroplastic (TPS-LAS) from Picea abies (Norway spruce).